The following is a 199-amino-acid chain: Protein ZNRD2 (199 aa).

Residue Ala-2 is modified to N-acetylalanine. Residues Cys-53, Cys-56, Cys-70, and Cys-73 each contribute to the Zn(2+) site. The residue at position 94 (Ser-94) is a Phosphoserine. The segment at Gln-100–Cys-125 is disordered. A Nuclear export signal motif is present at residues Ser-173–Leu-194.

In terms of assembly, homodimer. It depends on Zn(2+) as a cofactor.

The protein localises to the cytoplasm. Its function is as follows. Might play a role in mitosis. Antigenic molecule. Could be a centromere-associated protein. May induce anti-centromere antibodies. This Homo sapiens (Human) protein is Protein ZNRD2.